The sequence spans 266 residues: Glutamate racemase (266 aa).

Substrate contacts are provided by residues Asp9 to Ser10 and Tyr41 to Gly42. The active-site Proton donor/acceptor is Cys72. Substrate is bound at residue Asn73–Thr74. Cys183 functions as the Proton donor/acceptor in the catalytic mechanism. Position 184-185 (Thr184–His185) interacts with substrate.

Belongs to the aspartate/glutamate racemases family.

The enzyme catalyses L-glutamate = D-glutamate. The protein operates within cell wall biogenesis; peptidoglycan biosynthesis. Functionally, provides the (R)-glutamate required for cell wall biosynthesis. The sequence is that of Glutamate racemase from Listeria innocua serovar 6a (strain ATCC BAA-680 / CLIP 11262).